The sequence spans 1043 residues: BAG family molecular chaperone regulator 6 (1043 aa).

5 disordered regions span residues 253–294 (KEEL…GKTV), 311–331 (DVKE…PYPI), 343–366 (VEAS…SDLH), 410–500 (NIPV…AESR), and 533–566 (SVES…KKSF). 4 stretches are compositionally biased toward basic and acidic residues: residues 311–324 (DVKE…KEEP), 343–357 (VEAS…EGRN), 416–443 (SENH…KKEQ), and 478–487 (KRMEKSKETK). Polar residues predominate over residues 534-543 (VESNSNLQEE). Basic and acidic residues predominate over residues 550 to 566 (KPCEAKENREQPAKKSF). The IQ domain occupies 568 to 597 (EEEAARIIQSMYRGYDVRRWEPIKKLKEIA). The 78-residue stretch at 595 to 672 (EIATVREQMG…SIQDKLDSLK (78 aa)) folds into the BAG domain. Positions 724–741 (SPEEHPMSVLNRTDEKQA) are enriched in basic and acidic residues. 4 disordered regions span residues 724 to 749 (SPEE…ETEE), 764 to 799 (ATEN…GNGM), 817 to 975 (EPIN…ISKE), and 1015 to 1043 (EKKL…DAVL). Residues 840–852 (ASEVSEAETNSSE) show a composition bias toward low complexity. Positions 853 to 871 (NENRKGEDDIVLHSEKNVE) are enriched in basic and acidic residues. Composition is skewed to polar residues over residues 885-899 (QPLS…TREG) and 919-932 (SPNN…QTSE). The segment covering 934 to 951 (QDEKEQSPETEVIVKEQP) has biased composition (basic and acidic residues). A coiled-coil region spans residues 971-1024 (GISKETKKLMEENQRFKETMETLVKAGREQLEVISKLTSRVKSLEKKLSHKKKT). Over residues 1018–1031 (LSHKKKTQIRRRAS) the composition is skewed to basic residues. Over residues 1034–1043 (MSVSPTDAVL) the composition is skewed to polar residues.

As to quaternary structure, binds to the ATPase domain of HSP70/HSC70 chaperones. Interacts with calmodulins CAM1, CAM2, CAM3, CAM4, CAM6 and CAM7. Interacts with BAGP1 and APCB1. In terms of tissue distribution, detected in stems, leaves, flowers and roots.

Co-chaperone that regulates diverse cellular pathways, such as programmed cell death and stress responses. Involved in plant basal resistance. Involved in basal heat response through the regulation of the heat induced small HSP (sHSP) transcriptional cascade. Functionally, induces autophagy. This is BAG family molecular chaperone regulator 6 from Arabidopsis thaliana (Mouse-ear cress).